A 280-amino-acid polypeptide reads, in one-letter code: Formamidopyrimidine-DNA glycosylase (280 aa).

Proline 2 (schiff-base intermediate with DNA) is an active-site residue. Glutamate 3 functions as the Proton donor in the catalytic mechanism. Catalysis depends on lysine 59, which acts as the Proton donor; for beta-elimination activity. 2 residues coordinate DNA: histidine 92 and arginine 111. The FPG-type zinc-finger motif lies at asparagine 239–glutamine 273. The active-site Proton donor; for delta-elimination activity is arginine 263.

It belongs to the FPG family. Monomer. It depends on Zn(2+) as a cofactor.

The catalysed reaction is Hydrolysis of DNA containing ring-opened 7-methylguanine residues, releasing 2,6-diamino-4-hydroxy-5-(N-methyl)formamidopyrimidine.. It carries out the reaction 2'-deoxyribonucleotide-(2'-deoxyribose 5'-phosphate)-2'-deoxyribonucleotide-DNA = a 3'-end 2'-deoxyribonucleotide-(2,3-dehydro-2,3-deoxyribose 5'-phosphate)-DNA + a 5'-end 5'-phospho-2'-deoxyribonucleoside-DNA + H(+). Its function is as follows. Involved in base excision repair of DNA damaged by oxidation or by mutagenic agents. Acts as a DNA glycosylase that recognizes and removes damaged bases. Has a preference for oxidized purines, such as 7,8-dihydro-8-oxoguanine (8-oxoG). Has AP (apurinic/apyrimidinic) lyase activity and introduces nicks in the DNA strand. Cleaves the DNA backbone by beta-delta elimination to generate a single-strand break at the site of the removed base with both 3'- and 5'-phosphates. The polypeptide is Formamidopyrimidine-DNA glycosylase (Enterococcus faecalis (strain ATCC 700802 / V583)).